The following is an 834-amino-acid chain: Periplasmic nitrate reductase (834 aa).

The segment at residues 1–32 (MTEPKIDRRQLLKLEAAAIAAAAAGMPTVARA) is a signal peptide (tat-type signal). The 4Fe-4S Mo/W bis-MGD-type domain occupies 44-100 (LKWDKAACRFCGTGCSVMVATKDNRVVATHGDIKAEVNRGLNCVKGYFLSKIMYGHD). Positions 51, 54, 58, and 86 each coordinate [4Fe-4S] cluster. Mo-bis(molybdopterin guanine dinucleotide) is bound by residues Lys88, Gln155, Asn180, Cys184, 217-224 (WGSNMAEM), 248-252 (STFEH), 267-269 (QTD), Met378, Gln382, Asn488, 514-515 (SD), Lys537, Asp564, and 724-733 (TGRVVEHWHS). Trp800 lines the substrate pocket. Residues Asn808 and Lys825 each coordinate Mo-bis(molybdopterin guanine dinucleotide).

It belongs to the prokaryotic molybdopterin-containing oxidoreductase family. NasA/NapA/NarB subfamily. As to quaternary structure, component of the periplasmic nitrate reductase NapAB complex composed of NapA and NapB. Requires [4Fe-4S] cluster as cofactor. It depends on Mo-bis(molybdopterin guanine dinucleotide) as a cofactor. Predicted to be exported by the Tat system. The position of the signal peptide cleavage has not been experimentally proven.

Its subcellular location is the periplasm. It catalyses the reaction 2 Fe(II)-[cytochrome] + nitrate + 2 H(+) = 2 Fe(III)-[cytochrome] + nitrite + H2O. Catalytic subunit of the periplasmic nitrate reductase complex NapAB. Receives electrons from NapB and catalyzes the reduction of nitrate to nitrite. The chain is Periplasmic nitrate reductase from Bradyrhizobium sp. (strain ORS 278).